The chain runs to 328 residues: MGVFRTRFTETFGVEHPIMQGGMQWVGRAEMAAAVANAGGLATLSALTQPSPEALAAEIARCRELTDRPFGVNLTLLPTQKPVPYAEYRAAIIEAGIRVVETAGNDPGEHIAEFRRHGVKVIHKCTAVRHALKAERLGVDAVSIDGFECAGHPGEDDIPGLVLLPAAANRLRVPIIASGGFADGRGLVAALALGADAINMGTRFLATRECPIHPAVKAAIRAADERSTDLIMRSLRNTARVARNAISQEVLAIEARGGAGYADIAALVSGQRGRQVYQQGDTDLGIWSAGMVQGLIDDEPACAELLRDIVEQARQLVRQRLEGMLAGV.

Residues 22-24, Thr75, Lys124, Ala150, 178-180, and 201-202 each bind FMN; these read GMQ, SGG, and GT.

It belongs to the nitronate monooxygenase family. Monomer. FMN is required as a cofactor.

The enzyme catalyses a quinone + NADH + H(+) = a quinol + NAD(+). Catalyzes the NADH-dependent reduction of a broad spectrum of quinone substrates, generating the corresponding hydroquinones. Highly prefers NADH to NADPH as a reducing substrate. Also displays a small NADH oxidase activity. Does not exhibit nitronate monooxygenase activity; is inactive against propionate 3-nitronate, 3-nitropropionate, nitroethane, 1-nitropropane, 2-nitropropane, and the anionic forms ethylnitronate, propyl-1-nitronate, and propyl-2-nitronate. Has no azoreductase activity since it is not able to reduce the azo dye methyl red with NADH. May be required to maintain an appropriate [NAD(+)]/[NADH] ratio for the catabolism of fatty acids in P.aeruginosa PAO1. This Pseudomonas aeruginosa (strain ATCC 15692 / DSM 22644 / CIP 104116 / JCM 14847 / LMG 12228 / 1C / PRS 101 / PAO1) protein is NADH:quinone reductase.